Reading from the N-terminus, the 257-residue chain is 4-hydroxy-tetrahydrodipicolinate reductase (257 aa).

Position 7–12 (7–12) interacts with NAD(+); sequence GCLGRM. Arg34 contacts NADP(+). NAD(+)-binding positions include 96-98 and 117-120; these read GTT and SCNM. Catalysis depends on His149, which acts as the Proton donor/acceptor. Residue His150 participates in (S)-2,3,4,5-tetrahydrodipicolinate binding. The Proton donor role is filled by Lys153. Position 159–160 (159–160) interacts with (S)-2,3,4,5-tetrahydrodipicolinate; the sequence is GT.

Belongs to the DapB family.

It localises to the cytoplasm. The enzyme catalyses (S)-2,3,4,5-tetrahydrodipicolinate + NAD(+) + H2O = (2S,4S)-4-hydroxy-2,3,4,5-tetrahydrodipicolinate + NADH + H(+). It catalyses the reaction (S)-2,3,4,5-tetrahydrodipicolinate + NADP(+) + H2O = (2S,4S)-4-hydroxy-2,3,4,5-tetrahydrodipicolinate + NADPH + H(+). It functions in the pathway amino-acid biosynthesis; L-lysine biosynthesis via DAP pathway; (S)-tetrahydrodipicolinate from L-aspartate: step 4/4. Catalyzes the conversion of 4-hydroxy-tetrahydrodipicolinate (HTPA) to tetrahydrodipicolinate. The protein is 4-hydroxy-tetrahydrodipicolinate reductase of Anaplasma marginale (strain St. Maries).